A 293-amino-acid polypeptide reads, in one-letter code: Putative F-box/kelch-repeat protein At4g34170 (293 aa).

The F-box domain maps to 9 to 55 (VKTMLMLHDDLILNCLARVSRSNHPTLSLVCKRFHSLLASVELYQTR). 3 Kelch repeats span residues 94 to 140 (NIDA…TLDG), 141 to 187 (KIYV…ESVR), and 226 to 272 (SYCV…LADY).

This chain is Putative F-box/kelch-repeat protein At4g34170, found in Arabidopsis thaliana (Mouse-ear cress).